The sequence spans 63 residues: Large ribosomal subunit protein bL28 (63 aa).

This sequence belongs to the bacterial ribosomal protein bL28 family.

This is Large ribosomal subunit protein bL28 from Geotalea uraniireducens (strain Rf4) (Geobacter uraniireducens).